A 431-amino-acid chain; its full sequence is Serine hydroxymethyltransferase (431 aa).

Residues leucine 128 and 132–134 (GHL) contribute to the (6S)-5,6,7,8-tetrahydrofolate site. At lysine 237 the chain carries N6-(pyridoxal phosphate)lysine.

It belongs to the SHMT family. As to quaternary structure, homodimer. Requires pyridoxal 5'-phosphate as cofactor.

The protein localises to the cytoplasm. The enzyme catalyses (6R)-5,10-methylene-5,6,7,8-tetrahydrofolate + glycine + H2O = (6S)-5,6,7,8-tetrahydrofolate + L-serine. The protein operates within one-carbon metabolism; tetrahydrofolate interconversion. It functions in the pathway amino-acid biosynthesis; glycine biosynthesis; glycine from L-serine: step 1/1. Its function is as follows. Catalyzes the reversible interconversion of serine and glycine with tetrahydrofolate (THF) serving as the one-carbon carrier. This reaction serves as the major source of one-carbon groups required for the biosynthesis of purines, thymidylate, methionine, and other important biomolecules. Also exhibits THF-independent aldolase activity toward beta-hydroxyamino acids, producing glycine and aldehydes, via a retro-aldol mechanism. This Ruegeria pomeroyi (strain ATCC 700808 / DSM 15171 / DSS-3) (Silicibacter pomeroyi) protein is Serine hydroxymethyltransferase.